Consider the following 626-residue polypeptide: Janus kinase and microtubule-interacting protein 1 (626 aa).

Positions 1–25 (MSKKGRSKGDKPEAETDSVQMANEE) are disordered. The mediates association with microtubules stretch occupies residues 1 to 365 (MSKKGRSKGD…KLKSLTRENV (365 aa)). Coiled coils occupy residues 13–255 (EAET…EAER) and 284–413 (ERDV…DDLS). The tract at residues 365–626 (VEMKEKLSAQ…ILFEPKLKFM (262 aa)) is mediates interaction with TYK2 and GABBR1. S382 carries the phosphoserine modification. The segment covering 452 to 461 (ETLSETSYNT) has biased composition (polar residues). The segment at 452–481 (ETLSETSYNTDRTDRTPATPEEDLDETTTR) is disordered. At T470 the chain carries Phosphothreonine. Residues 490 to 604 (QLTREYQALQ…EFRVLELEVR (115 aa)) are a coiled coil.

This sequence belongs to the JAKMIP family. In terms of assembly, homodimer. Interacts with JAK1 and TYK2. Forms a complex with GABBR1 and KIF5B/kinesin-1. Post-translationally, phosphorylated.

The protein localises to the cytoplasm. It is found in the cytoskeleton. The protein resides in the membrane. Associates with microtubules and may play a role in the microtubule-dependent transport of the GABA-B receptor. May play a role in JAK1 signaling and regulate microtubule cytoskeleton rearrangements. In Mus musculus (Mouse), this protein is Janus kinase and microtubule-interacting protein 1 (Jakmip1).